The sequence spans 324 residues: Phospho-N-acetylmuramoyl-pentapeptide-transferase (324 aa).

The next 9 membrane-spanning stretches (helical) occupy residues 13–33 (VLSALLMGFAFSMVLGPIFIP), 59–79 (PTMGGLIFFISVTVTMLIIGY), 85–105 (GMVVLYSLIAFGIIGFLDDIL), 121–141 (MILLLLFSIALAYYGYTNIGT), 143–163 (IIIPFMNSKLNLGIFYIPLVV), 179–199 (IDGLASSVTVIVLTFFAIVGF), 201–221 (TGHYQVGVFSIALAGALLGFL), 243–263 (AIATIALILKMPLFIIIVGGI), and 303–323 (VKLVTVFSIITLILCIIGFIA).

It belongs to the glycosyltransferase 4 family. MraY subfamily. Requires Mg(2+) as cofactor.

It is found in the cell membrane. It carries out the reaction UDP-N-acetyl-alpha-D-muramoyl-L-alanyl-gamma-D-glutamyl-meso-2,6-diaminopimeloyl-D-alanyl-D-alanine + di-trans,octa-cis-undecaprenyl phosphate = di-trans,octa-cis-undecaprenyl diphospho-N-acetyl-alpha-D-muramoyl-L-alanyl-D-glutamyl-meso-2,6-diaminopimeloyl-D-alanyl-D-alanine + UMP. The protein operates within cell wall biogenesis; peptidoglycan biosynthesis. Catalyzes the initial step of the lipid cycle reactions in the biosynthesis of the cell wall peptidoglycan: transfers peptidoglycan precursor phospho-MurNAc-pentapeptide from UDP-MurNAc-pentapeptide onto the lipid carrier undecaprenyl phosphate, yielding undecaprenyl-pyrophosphoryl-MurNAc-pentapeptide, known as lipid I. This is Phospho-N-acetylmuramoyl-pentapeptide-transferase from Clostridium botulinum (strain Alaska E43 / Type E3).